A 419-amino-acid chain; its full sequence is GTPase Obg (419 aa).

Residues 2–159 (SAFVDAVTVE…FLAKVELQVL (158 aa)) enclose the Obg domain. Residues 160 to 325 (ADVGLLGYPN…LKYEIATTLK (166 aa)) enclose the OBG-type G domain. Residues 166–173 (GYPNVGKS), 191–195 (FTTLS), 212–215 (DLPG), 279–282 (NKMD), and 306–308 (SAL) contribute to the GTP site. Mg(2+) contacts are provided by serine 173 and threonine 193. The OCT domain maps to 341 to 419 (LNAEDAVDFI…IFSYEFEYLE (79 aa)).

The protein belongs to the TRAFAC class OBG-HflX-like GTPase superfamily. OBG GTPase family. As to quaternary structure, monomer. Requires Mg(2+) as cofactor.

Its subcellular location is the cytoplasm. In terms of biological role, an essential GTPase which binds GTP, GDP and possibly (p)ppGpp with moderate affinity, with high nucleotide exchange rates and a fairly low GTP hydrolysis rate. Plays a role in control of the cell cycle, stress response, ribosome biogenesis and in those bacteria that undergo differentiation, in morphogenesis control. The polypeptide is GTPase Obg (Acholeplasma laidlawii (strain PG-8A)).